Consider the following 354-residue polypeptide: Protein-arginine kinase (354 aa).

Positions 24–254 (IVLSSRIRLA…QQIIQQEKLA (231 aa)) constitute a Phosphagen kinase C-terminal domain. ATP is bound by residues 27–31 (SSRIR), H92, R125, 176–180 (RASVM), and 207–212 (RGIYGE). Residues 337 to 342 (RDYRRA) carry the RDXXRA motif of the pArg binding pocket involved in allosteric regulation motif.

This sequence belongs to the ATP:guanido phosphotransferase family.

It catalyses the reaction L-arginyl-[protein] + ATP = N(omega)-phospho-L-arginyl-[protein] + ADP + H(+). With respect to regulation, appears to be allosterically activated by the binding of pArg-containing polypeptides to the pArg-binding pocket localized in the C-terminal domain of McsB. In terms of biological role, catalyzes the specific phosphorylation of arginine residues in a large number of proteins. Is part of the bacterial stress response system. Protein arginine phosphorylation has a physiologically important role and is involved in the regulation of many critical cellular processes, such as protein homeostasis, motility, competence, and stringent and stress responses, by regulating gene expression and protein activity. The chain is Protein-arginine kinase from Bacillus cereus (strain B4264).